The primary structure comprises 447 residues: MKKLRSYYSNVRHHQNHHHHHHHHSNIVSSERKWIFFPLLIGSIFALFLLFLTTTLTSPTGGVRFLPFTRPVLLTGSGSSAFVESKIKPQQISSLPSPPRFAYLISGSAGDGKSLRRTLLALYHPNNRYVVHLDRESSREEREELHGYIKNSSLFRRFMNVHMIEKANLVTYRGPTMVANTLHAAAILLREGADWDWFINLSSSDYPLVTQDDLLHIFSHLPRDLNFIDHTSNIGWKASQRAKPVIIDPGLYLNKKSDVFWVTQRRSIPTAFKLFTGSAWMALSRPFVDYCIWGWDNLPRTVLMYYSNFLSSPEGYFHTVLCNAEEFRNTTVNSDLHFISWDNPPKQHPHHLTLTDMTKMVNSNAPFARKFRREDPVLDKIDDELLNRGPGMITPGGWCIGSHENGSDPCAVIGDTDVIRPGPGARRLENLVTSLLSTENFRSKQCK.

Residues 1-33 (MKKLRSYYSNVRHHQNHHHHHHHHSNIVSSERK) lie on the Cytoplasmic side of the membrane. Residues 34-54 (WIFFPLLIGSIFALFLLFLTT) form a helical; Signal-anchor for type II membrane protein membrane-spanning segment. Residues 55 to 447 (TLTSPTGGVR…TENFRSKQCK (393 aa)) lie on the Lumenal side of the membrane. N-linked (GlcNAc...) asparagine glycans are attached at residues asparagine 151, asparagine 200, asparagine 329, and asparagine 405.

This sequence belongs to the glycosyltransferase 14 family.

It is found in the golgi apparatus membrane. In terms of biological role, beta-glucuronosyltransferase involved in the biosynthesis of type II arabinogalactan (AG). Modifies both the beta-1,6-linked galactan and beta-1,3-linked galactan present in type II AG. Transfers glucuronate to beta-1,6-galactooligosaccharides with degrees of polymerization ranging from 3 to 11. Transfers glucuronate to beta-1,3-galactooligosaccharides with degrees of polymerization ranging from 5 to 7. The addition of glucuronate at the O6 position may terminate galactose chain extension. Required for cell elongation during seedling growth. This Arabidopsis thaliana (Mouse-ear cress) protein is Beta-glucuronosyltransferase GlcAT14A.